Reading from the N-terminus, the 381-residue chain is uncharacterized protein (381 aa).

9 consecutive transmembrane segments (helical) span residues 59–79, 84–104, 147–167, 190–210, 222–242, 250–270, 284–304, 311–331, and 344–364; these read LITL…LYYM, GVAP…YQTM, VGVN…FFMA, SMMA…FNTI, LVLL…TFSI, ILTN…SIYW, HYFM…LILA, LSPI…IYKF, and VYFF…VTSL.

Belongs to the CDP-alcohol phosphatidyltransferase class-I family.

The protein resides in the membrane. This is an uncharacterized protein from Dictyostelium discoideum (Social amoeba).